Consider the following 247-residue polypeptide: Carboxy-S-adenosyl-L-methionine synthase (247 aa).

S-adenosyl-L-methionine-binding positions include Tyr40, 65–67 (GAS), 90–91 (DN), 122–123 (DI), Asn137, and Arg204.

This sequence belongs to the class I-like SAM-binding methyltransferase superfamily. Cx-SAM synthase family. Homodimer.

It catalyses the reaction prephenate + S-adenosyl-L-methionine = carboxy-S-adenosyl-L-methionine + 3-phenylpyruvate + H2O. Its function is as follows. Catalyzes the conversion of S-adenosyl-L-methionine (SAM) to carboxy-S-adenosyl-L-methionine (Cx-SAM). The polypeptide is Carboxy-S-adenosyl-L-methionine synthase (Pseudomonas putida (strain ATCC 47054 / DSM 6125 / CFBP 8728 / NCIMB 11950 / KT2440)).